The following is a 331-amino-acid chain: F-box protein At2g26160 (331 aa).

One can recognise an F-box domain in the interval 4–52 (PEWSELPGDLINLTANRFSSISDVLRVRSICKPWRSAAATPKSFQCNLP).

The polypeptide is F-box protein At2g26160 (Arabidopsis thaliana (Mouse-ear cress)).